A 393-amino-acid polypeptide reads, in one-letter code: Serine/threonine-protein phosphatase 2A activator 1 (393 aa).

A disordered region spans residues 328-393 (EKEEESIEQA…TSFSRDRLRR (66 aa)). 2 stretches are compositionally biased toward polar residues: residues 335–356 (EQAN…TSTS) and 365–386 (SGNN…QTSF). Ser341 is subject to Phosphoserine.

This sequence belongs to the PTPA-type PPIase family. Interacts with the phosphatase PP2A-like catalytic subunits PPG1, PPH3 and SIT4. Forms a ternary complex with SIT4-TAP42.

It is found in the cytoplasm. The protein localises to the nucleus. The catalysed reaction is [protein]-peptidylproline (omega=180) = [protein]-peptidylproline (omega=0). In terms of biological role, PPIases accelerate the folding of proteins. It catalyzes the cis-trans isomerization of proline imidic peptide bonds in oligopeptides. Acts as a regulatory subunit for TAP42-associated PP2A-like phosphatases modulating their activity or substrate specificity, probably by inducing a conformational change in the catalytic subunit, a direct target of the PPIase. Can reactivate inactive phosphatase PP2A-phosphatase methylesterase complexes (PP2Ai) in presence of ATP and Mg(2+) by dissociating the inactive form from the complex. Involved in the regulation of cell cycle progression, mitotic spindle formation, bud morphogenesis and DNA repair. The chain is Serine/threonine-protein phosphatase 2A activator 1 (RRD1) from Saccharomyces cerevisiae (strain ATCC 204508 / S288c) (Baker's yeast).